A 394-amino-acid chain; its full sequence is Cytochrome b (394 aa).

4 helical membrane passes run 39-59 (FGSL…FLAM), 83-105 (WLLR…LHTF), 120-140 (VWCL…IGYV), and 186-206 (FFSL…LHLA). Heme b-binding residues include H89 and H103. The heme b site is built by H191 and H204. H209 provides a ligand contact to a ubiquinone. A run of 4 helical transmembrane segments spans residues 232–252 (FYVK…IWIF), 296–316 (AGGV…PFFK), 328–348 (IYQG…WIGC), and 355–374 (FVTI…AITP).

This sequence belongs to the cytochrome b family. As to quaternary structure, the main subunits of complex b-c1 are: cytochrome b, cytochrome c1 and the Rieske protein. Requires heme b as cofactor.

It localises to the mitochondrion inner membrane. Component of the ubiquinol-cytochrome c reductase complex (complex III or cytochrome b-c1 complex) that is part of the mitochondrial respiratory chain. The b-c1 complex mediates electron transfer from ubiquinol to cytochrome c. Contributes to the generation of a proton gradient across the mitochondrial membrane that is then used for ATP synthesis. The chain is Cytochrome b (MT-CYB) from Oenothera berteroana (Bertero's evening primrose).